Here is a 293-residue protein sequence, read N- to C-terminus: Dehydrodolichyl diphosphate synthase complex subunit NUS1 (293 aa).

3 consecutive transmembrane segments (helical) span residues 1 to 23, 35 to 56, and 117 to 135; these read MTGL…RTLT, WIWR…GFTL, and IASL…ISVY. Residues N144 and N271 are each glycosylated (N-linked (GlcNAc...) asparagine). An RXG motif; crucial for prenyltransferase activity motif is present at residues 290–292; sequence RLG. L291 and G292 together coordinate isopentenyl diphosphate.

The protein belongs to the UPP synthase family. As to quaternary structure, the active dehydrodolichyl diphosphate synthase complex is a heterotetramer composed of a dimer of heterodimer of DHDDS and NUS1. Interacts with NPC2. It depends on Mg(2+) as a cofactor.

The protein localises to the endoplasmic reticulum membrane. The enzyme catalyses n isopentenyl diphosphate + (2E,6E)-farnesyl diphosphate = a di-trans,poly-cis-polyprenyl diphosphate + n diphosphate. It participates in protein modification; protein glycosylation. Its pathway is lipid metabolism. Activated by phospholipids including cardiolipin, phosphatidylcholine, phosphatidylethanolamine, phosphatidylinositol and phosphatidylserine. Its function is as follows. With DHDDS, forms the dehydrodolichyl diphosphate synthase (DDS) complex, an essential component of the dolichol monophosphate (Dol-P) biosynthetic machinery. Both subunits contribute to enzymatic activity, i.e. condensation of multiple copies of isopentenyl pyrophosphate (IPP) to farnesyl pyrophosphate (FPP) to produce dehydrodolichyl diphosphate (Dedol-PP), a precursor of dolichol phosphate which is utilized as a sugar carrier in protein glycosylation in the endoplasmic reticulum (ER). Synthesizes long-chain polyprenols, mostly of C95 and C100 chain length. Regulates the glycosylation and stability of nascent NPC2, thereby promoting trafficking of LDL-derived cholesterol. Acts as a specific receptor for the N-terminus of Nogo-B, a neural and cardiovascular regulator. The sequence is that of Dehydrodolichyl diphosphate synthase complex subunit NUS1 from Homo sapiens (Human).